The sequence spans 363 residues: MTDNPADNKVFNEVSSLYKQYFDYAINVRKWLEIPDDLPHREIGYGMLKKVDNRNMSFNTNGEYLAWVLKESPFHLYKSLSYMEYPDVVGGAAKKGLIKREVAFDIDTHKTEKCTHDDSWICEECLGEARNQVLILIEDFLFPDFGLSEKDLKIVFTGNRGYHIYLKPEDTKKIGDTKLLEKIEKWEKNERRYFIEYILGKNLNLRNMGSRWKNILIREFKKNKISTKKFEKTSDWKTEIDTRKDNVRREIYETIGKVKSRLELDEKVMDDDIRLLRTIGSLHGYTGLMVKEITYSSLKSNQFDPLNHGVFSKFHKIMYNVNIKQEIDPLTLKGDTFDHKSTEIPASYLLFLFGHGIDFEILE.

Residues Asp-105, Asp-107, and Asp-265 contribute to the active site.

The protein belongs to the eukaryotic-type primase small subunit family. As to quaternary structure, heterodimer of a small subunit (PriS) and a large subunit (PriL). It depends on Mg(2+) as a cofactor. Requires Mn(2+) as cofactor.

Catalytic subunit of DNA primase, an RNA polymerase that catalyzes the synthesis of short RNA molecules used as primers for DNA polymerase during DNA replication. The small subunit contains the primase catalytic core and has DNA synthesis activity on its own. Binding to the large subunit stabilizes and modulates the activity, increasing the rate of DNA synthesis while decreasing the length of the DNA fragments, and conferring RNA synthesis capability. The DNA polymerase activity may enable DNA primase to also catalyze primer extension after primer synthesis. May also play a role in DNA repair. This is DNA primase small subunit PriS from Methanococcus maripaludis (strain C7 / ATCC BAA-1331).